The following is a 511-amino-acid chain: RNA polymerase principal sigma factor HrdB (511 aa).

A disordered region spans residues 72 to 186; the sequence is SAAEPKRTRK…AATEEPEGTE (115 aa). Residues 78–93 show a composition bias toward basic residues; it reads RTRKSVAAKSPAKRTA. Residues 94–121 show a composition bias toward low complexity; that stretch reads TKAVAAKPVTSRKATAPAAPAAPATEPA. Residues 132–158 show a composition bias toward basic residues; that stretch reads AAAKKTTAKKATAKKTTAKKAAAKKTT. A binds RNA polymerase-binding protein RbpA region spans residues 211 to 347; that stretch reads TADPVKDYLK…ITRAMADQAR (137 aa). The segment at 278–348 is sigma-70 factor domain-2; sequence LLEANLRLVV…TRAMADQART (71 aa). Positions 302–305 match the Interaction with polymerase core subunit RpoC motif; that stretch reads DLIQ. The segment at 357-433 is sigma-70 factor domain-3; it reads EVINKLARVQ…DSEAVVPADA (77 aa). The segment at 446–499 is sigma-70 factor domain-4; that stretch reads VLDTLSEREAGVVSMRFGLTDGQPKTLDEIGKVYGVTRERIRQIESKTMSKLRH. Positions 472-491 form a DNA-binding region, H-T-H motif; that stretch reads LDEIGKVYGVTRERIRQIES.

It belongs to the sigma-70 factor family. In terms of assembly, homotrimer (Potential). interacts transiently with the RNA polymerase core complex. Interacts with RNA polymerase-binding protein RbpA via its sigma-2 region (residues 211-347) in a free form.

Sigma factors are initiation factors that promote the attachment of RNA polymerase to specific initiation sites and are then released. This sigma factor is the primary sigma factor during exponential growth. Its activity is stimulated by RbpA. This is RNA polymerase principal sigma factor HrdB (hrdB) from Streptomyces coelicolor (strain ATCC BAA-471 / A3(2) / M145).